Consider the following 379-residue polypeptide: Protein RecA (379 aa).

The disordered stretch occupies residues 1–23 (MSVDVKSAQSSKSDSLQVEPRPG). Positions 7 to 16 (SAQSSKSDSL) are enriched in polar residues. 84-91 (GPESSGKT) contacts ATP.

It belongs to the RecA family.

It localises to the cytoplasm. Its function is as follows. Can catalyze the hydrolysis of ATP in the presence of single-stranded DNA, the ATP-dependent uptake of single-stranded DNA by duplex DNA, and the ATP-dependent hybridization of homologous single-stranded DNAs. It interacts with LexA causing its activation and leading to its autocatalytic cleavage. This Prochlorococcus marinus (strain MIT 9313) protein is Protein RecA.